A 249-amino-acid chain; its full sequence is tRNA (guanine-N(1)-)-methyltransferase (249 aa).

S-adenosyl-L-methionine contacts are provided by residues Gly-116 and 136–141 (IGDYIL).

This sequence belongs to the RNA methyltransferase TrmD family. As to quaternary structure, homodimer.

Its subcellular location is the cytoplasm. It carries out the reaction guanosine(37) in tRNA + S-adenosyl-L-methionine = N(1)-methylguanosine(37) in tRNA + S-adenosyl-L-homocysteine + H(+). Its function is as follows. Specifically methylates guanosine-37 in various tRNAs. This is tRNA (guanine-N(1)-)-methyltransferase from Zymomonas mobilis subsp. mobilis (strain ATCC 31821 / ZM4 / CP4).